A 287-amino-acid chain; its full sequence is Orotidine 5'-phosphate decarboxylase (287 aa).

The active-site Proton donor is lysine 97.

Belongs to the OMP decarboxylase family. Type 2 subfamily.

The catalysed reaction is orotidine 5'-phosphate + H(+) = UMP + CO2. Its pathway is pyrimidine metabolism; UMP biosynthesis via de novo pathway; UMP from orotate: step 2/2. In Clostridium perfringens (strain SM101 / Type A), this protein is Orotidine 5'-phosphate decarboxylase.